The primary structure comprises 337 residues: 5-formaminoimidazole-4-carboxamide-1-(beta)-D-ribofuranosyl 5'-monophosphate synthetase (337 aa).

5-amino-1-(5-phospho-beta-D-ribosyl)imidazole-4-carboxamide contacts are provided by His23 and Ser87. Positions 121-328 (MRLLEYAGIP…IAHEIVNAVK (208 aa)) constitute an ATP-grasp domain. ATP contacts are provided by residues 144-191 (PVIV…VPAY) and Glu213. A 5-amino-1-(5-phospho-beta-D-ribosyl)imidazole-4-carboxamide-binding site is contributed by Asn233. 2 residues coordinate Mg(2+): Glu272 and Glu285.

It belongs to the phosphohexose mutase family. Mg(2+) is required as a cofactor. Mn(2+) serves as cofactor.

The enzyme catalyses 5-amino-1-(5-phospho-beta-D-ribosyl)imidazole-4-carboxamide + formate + ATP = 5-formamido-1-(5-phospho-D-ribosyl)imidazole-4-carboxamide + ADP + phosphate. It functions in the pathway purine metabolism; IMP biosynthesis via de novo pathway; 5-formamido-1-(5-phospho-D-ribosyl)imidazole-4-carboxamide from 5-amino-1-(5-phospho-D-ribosyl)imidazole-4-carboxamide (formate route): step 1/1. Its function is as follows. Catalyzes the ATP- and formate-dependent formylation of 5-aminoimidazole-4-carboxamide-1-beta-d-ribofuranosyl 5'-monophosphate (AICAR) to 5-formaminoimidazole-4-carboxamide-1-beta-d-ribofuranosyl 5'-monophosphate (FAICAR) in the absence of folates. In Caldivirga maquilingensis (strain ATCC 700844 / DSM 13496 / JCM 10307 / IC-167), this protein is 5-formaminoimidazole-4-carboxamide-1-(beta)-D-ribofuranosyl 5'-monophosphate synthetase.